The following is a 498-amino-acid chain: Cytochrome P450 monooxygenase ltmP (498 aa).

Positions 1-21 are cleaved as a signal peptide; it reads MLMLHAVPVGICLLLWYVVYG. Asn-420 carries N-linked (GlcNAc...) asparagine glycosylation. Cys-435 serves as a coordination point for heme.

The protein belongs to the cytochrome P450 family. Heme is required as a cofactor.

It participates in secondary metabolite biosynthesis. Its function is as follows. Cytochrome P450 monooxygenase; part of the gene clusters that mediates the biosynthesis of lolitrems, indole-diterpene mycotoxins that are potent tremorgens in mammals, and are synthesized by clavicipitaceous fungal endophytes in association with their grass hosts. The geranylgeranyl diphosphate (GGPP) synthase ltmG is proposed to catalyze the first step in lolitrem biosynthesis. LtmG catalyzes a series of iterative condensations of isopentenyl diphosphate (IPP) with dimethylallyl diphosphate (DMAPP), geranyl diphosphate (GPP), and farnesyl diphosphate (FPP), to form GGPP. GGPP then condenses with indole-3-glycerol phosphate to form 3-geranylgeranylindole, an acyclic intermediate, to be incorporated into paxilline. Either ltmG or ltmC could be responsible for this step, as both are putative prenyl transferases. The FAD-dependent monooxygenase ltmM then catalyzes the epoxidation of the two terminal alkenes of the geranylgeranyl moiety, which is subsequently cyclized by ltmB, to paspaline. The cytochrome P450 monooxygenases ltmQ and ltmP can sequentially oxidize paspaline to terpendole E and terpendole F. Alternatively, ltmP converts paspaline to an intermediate which is oxidized by ltmQ to terpendole F. LtmF, ltmK, ltmE and ltmJ appear to be unique to the epichloe endophytes. The prenyltransferase ltmF is involved in the 27-hydroxyl-O-prenylation. The cytochrome P450 monooxygenase ltmK is required for the oxidative acetal ring formation. The multi-functional prenyltransferase ltmE is required for C20- and C21-prenylations of the indole ring of paspalanes and acts together with the cytochrome P450 monooxygenase ltmJ to yield lolitremanes by multiple oxidations and ring closures. The stereoisomer pairs of lolitriol and lolitrem N or lolitrem B and lolitrem F may be attributed to variations in the way in which ring closure can occur under the action of ltmJ. While the major product of this pathway is lolitrem B, the prenyl transferases and cytochrome P450 monooxygenases identified in this pathway have a remarkable versatility in their regio- and stereo-specificities to generate a diverse range of metabolites that are products of a metabolic grid rather than a linear pathway. This Epichloe festucae var. lolii (Neotyphodium lolii) protein is Cytochrome P450 monooxygenase ltmP.